The primary structure comprises 554 residues: Guanine nucleotide-binding protein alpha-2 subunit (554 aa).

2 disordered regions span residues Met1–Asn139 and Val157–Gly183. A lipid anchor (N-myristoyl glycine) is attached at Gly2. Residue Cys4 is the site of S-palmitoyl cysteine attachment. 2 stretches are compositionally biased toward basic and acidic residues: residues Lys7–Gly17 and Ala28–Gln43. Residues Gly52–Ser66 are compositionally biased toward low complexity. A compositionally biased stretch (polar residues) spans Gly67–Gly85. The segment covering Asp91–Asn139 has biased composition (low complexity). The region spanning Asn228–Leu554 is the G-alpha domain. Positions Lys231–Thr244 are G1 motif. GTP contacts are provided by Glu239, Ser240, Gly241, Lys242, Ser243, Thr244, Asp351, Ile376, Thr382, Gly405, Asn471, Lys472, Asp474, and Ala526. Ser243 contributes to the Mg(2+) binding site. Positions Asp374–Thr382 are G2 motif. Mg(2+) is bound at residue Thr382. Positions Leu398–Arg407 are G3 motif. Positions Val467–Asp474 are G4 motif. The G5 motif stretch occupies residues Thr524–Thr529.

Belongs to the G-alpha family. In terms of assembly, g proteins are composed of 3 units; alpha, beta and gamma. The alpha chain contains the guanine nucleotide binding site. The cofactor is Mg(2+).

Guanine nucleotide-binding proteins (G proteins) are involved as modulators or transducers in various transmembrane signaling systems. This protein may be involved in the determination of the cAMP level according to nutritional conditions, most probably as a regulator of adenylyl cyclase. The sequence is that of Guanine nucleotide-binding protein alpha-2 subunit (GPA2) from Kluyveromyces lactis (strain ATCC 8585 / CBS 2359 / DSM 70799 / NBRC 1267 / NRRL Y-1140 / WM37) (Yeast).